Here is a 287-residue protein sequence, read N- to C-terminus: Nucleotide-binding protein Ppro_0977 (287 aa).

Position 8-15 (8-15 (GMSGSGKS)) interacts with ATP. Residue 59–62 (DIRG) participates in GTP binding.

The protein belongs to the RapZ-like family.

Displays ATPase and GTPase activities. This is Nucleotide-binding protein Ppro_0977 from Pelobacter propionicus (strain DSM 2379 / NBRC 103807 / OttBd1).